Here is a 1018-residue protein sequence, read N- to C-terminus: UPF0182 protein Tfu_0541 (1018 aa).

Transmembrane regions (helical) follow at residues 20–40, 64–84, 115–135, 171–191, 212–232, 254–274, and 287–307; these read LAPV…AANF, ALLF…SVYF, VFFW…ATAE, VIIG…VVVH, VHLS…YWLE, AVLY…VLFF, and VSLG…PAIV. 2 disordered regions span residues 497–570 and 939–965; these read YPVD…QANN and GDEA…ASSD. 2 stretches are compositionally biased toward acidic residues: residues 542–560 and 939–959; these read QDQE…EEEQ and GDEA…EEEQ.

This sequence belongs to the UPF0182 family.

The protein localises to the cell membrane. The polypeptide is UPF0182 protein Tfu_0541 (Thermobifida fusca (strain YX)).